A 307-amino-acid polypeptide reads, in one-letter code: Homoserine kinase (307 aa).

An ATP-binding site is contributed by 85 to 95 (PLTRGLGSSAA).

This sequence belongs to the GHMP kinase family. Homoserine kinase subfamily.

The protein localises to the cytoplasm. It carries out the reaction L-homoserine + ATP = O-phospho-L-homoserine + ADP + H(+). The protein operates within amino-acid biosynthesis; L-threonine biosynthesis; L-threonine from L-aspartate: step 4/5. Catalyzes the ATP-dependent phosphorylation of L-homoserine to L-homoserine phosphate. In Caldicellulosiruptor bescii (strain ATCC BAA-1888 / DSM 6725 / KCTC 15123 / Z-1320) (Anaerocellum thermophilum), this protein is Homoserine kinase.